The primary structure comprises 1381 residues: Major capsid protein (1381 aa).

This sequence belongs to the herpesviridae major capsid protein family. In terms of assembly, homomultimer. Makes the hexons and eleven out of twelve pentons. Interacts with triplex proteins 1/TRX1 and 2/TRX2; adjacent capsomers are linked together in groups of three by triplexes, heterotrimeric complexes composed of one molecule of TRX1 and two molecules of TRX2. Interacts with scaffold protein; this interaction allows efficient MCP transport to the host nucleus. Interacts with capsid vertex component 2/CVC2. Interacts with the small capsomere-interacting protein/SCP.

The protein resides in the virion. The protein localises to the host nucleus. Self-assembles to form an icosahedral capsid with a T=16 symmetry, about 200 nm in diameter, and consisting of 150 hexons and 12 pentons (total of 162 capsomers). Hexons form the edges and faces of the capsid and are each composed of six MCP molecules. In contrast, one penton is found at each of the 12 vertices. Eleven of the pentons are MCP pentamers, while the last vertex is occupied by the portal complex. The capsid is surrounded by a layer of proteinaceous material designated the tegument which, in turn, is enclosed in an envelope of host cell-derived lipids containing virus-encoded glycoproteins. This is Major capsid protein from Epstein-Barr virus (strain AG876) (HHV-4).